The following is a 546-amino-acid chain: MTKYVFVTGGVVSSLGKGIAAASLGAILESRGIKVTHLKLDPYINVDPGTMSPFQHGEVFVTDDGAETDLDLGHYERFTSAKMAKRNNFTTGQIYDSVLKKERRGEYLGKTVQVIPHITDEIKDRIKAGAEGADVAIVEVGGTVGDIESLPFLEAIRQMGIMEGRNNVCFMHLTLLPYIPTAGELKTKPTQHSVKELREIGIQPDILLCRADRSIPVEERRKIALFCNVMPEAVIECLDADSIYKIPGMLHEQMLDEIVCHKLNILAKAADLTVWENLIVALEHPLHQVKIAFVGKYVDLTESYKSLIEAIKHAGIHTRSQVNIIYLDSEDIEKNGTGVLEDLDAILVPGGFGRRGTEGKIAAIRYARENKVPYLGICLGMQLAVVEFARDVAGMPGAHSTEFVQDTPYPVIGLITEWLDASGKIEKRTEDSDIGGTMRLGAQVCKLGEGTLARSIYGAPEITERHRHRYEVNNTLLAKLEEKGLIVAGRAPGTDLCEMVELPADVHPWFVGCQFHPEFTSNPRQGHPLFSSYVKAALANQKAKGK.

Positions 1–265 (MTKYVFVTGG…DEIVCHKLNI (265 aa)) are amidoligase domain. Ser-13 is a binding site for CTP. Ser-13 lines the UTP pocket. Residues 14 to 19 (SLGKGI) and Asp-71 contribute to the ATP site. Asp-71 and Glu-139 together coordinate Mg(2+). CTP contacts are provided by residues 146–148 (DIE), 186–191 (KTKPTQ), and Lys-222. UTP is bound by residues 186-191 (KTKPTQ) and Lys-222. The Glutamine amidotransferase type-1 domain maps to 290 to 543 (KIAFVGKYVD…VKAALANQKA (254 aa)). L-glutamine is bound at residue Gly-351. Cys-378 functions as the Nucleophile; for glutamine hydrolysis in the catalytic mechanism. L-glutamine-binding positions include 379-382 (LGMQ), Glu-402, and Arg-469. Active-site residues include His-516 and Glu-518.

The protein belongs to the CTP synthase family. Homotetramer.

It carries out the reaction UTP + L-glutamine + ATP + H2O = CTP + L-glutamate + ADP + phosphate + 2 H(+). It catalyses the reaction L-glutamine + H2O = L-glutamate + NH4(+). The catalysed reaction is UTP + NH4(+) + ATP = CTP + ADP + phosphate + 2 H(+). Its pathway is pyrimidine metabolism; CTP biosynthesis via de novo pathway; CTP from UDP: step 2/2. With respect to regulation, allosterically activated by GTP, when glutamine is the substrate; GTP has no effect on the reaction when ammonia is the substrate. The allosteric effector GTP functions by stabilizing the protein conformation that binds the tetrahedral intermediate(s) formed during glutamine hydrolysis. Inhibited by the product CTP, via allosteric rather than competitive inhibition. Catalyzes the ATP-dependent amination of UTP to CTP with either L-glutamine or ammonia as the source of nitrogen. Regulates intracellular CTP levels through interactions with the four ribonucleotide triphosphates. The protein is CTP synthase of Dechloromonas aromatica (strain RCB).